We begin with the raw amino-acid sequence, 91 residues long: Acylphosphatase (91 aa).

An Acylphosphatase-like domain is found at 5 to 91; it reads CSKFIVSGHV…EHDYQGFEIL (87 aa). Residues R20 and N38 contribute to the active site.

This sequence belongs to the acylphosphatase family.

The catalysed reaction is an acyl phosphate + H2O = a carboxylate + phosphate + H(+). The polypeptide is Acylphosphatase (acyP) (Vibrio cholerae serotype O1 (strain ATCC 39315 / El Tor Inaba N16961)).